A 194-amino-acid chain; its full sequence is Dof zinc finger protein DOF1.7 (194 aa).

The Dof-type zinc finger occupies 33-87; it reads LKCPRCDSPNTKFCYYNNYNLSQPRHFCKNCRRYWTKGGALRNIPVGGGTRKSNK. Positions 35, 38, 60, and 63 each coordinate Zn(2+). The disordered stretch occupies residues 74 to 125; sequence RNIPVGGGTRKSNKRSGSSPSSNLKNQTVAEKPDHHGSGSEEKEERVSGQEM. Over residues 88–99 the composition is skewed to low complexity; the sequence is RSGSSPSSNLKN. Over residues 104-121 the composition is skewed to basic and acidic residues; sequence EKPDHHGSGSEEKEERVS.

The protein resides in the nucleus. Its function is as follows. Transcription factor that binds specifically to a 5'-AA[AG]G-3' consensus core sequence. The protein is Dof zinc finger protein DOF1.7 (DOF1.7) of Arabidopsis thaliana (Mouse-ear cress).